The following is a 347-amino-acid chain: 4-hydroxy-2-oxovalerate aldolase 1 (347 aa).

One can recognise a Pyruvate carboxyltransferase domain in the interval 11–263 (VVLHDMCLRD…ETGVDLFKLM (253 aa)). Substrate is bound at residue 19–20 (RD). D20 is a Mn(2+) binding site. The active-site Proton acceptor is the H23. The substrate site is built by S173 and H202. Positions 202 and 204 each coordinate Mn(2+). Y293 lines the substrate pocket.

It belongs to the 4-hydroxy-2-oxovalerate aldolase family.

It carries out the reaction (S)-4-hydroxy-2-oxopentanoate = acetaldehyde + pyruvate. This is 4-hydroxy-2-oxovalerate aldolase 1 (lapG) from Azoarcus sp. (strain BH72).